The sequence spans 284 residues: RNase adapter protein RapZ (284 aa).

8–15 lines the ATP pocket; sequence GRSGSGKS. 56–59 contributes to the GTP binding site; it reads DVRN. An RNA-binding region spans residues 266–284; that stretch reads RSRGKNVQSRHRTLEKRKP.

The protein belongs to the RapZ-like family. RapZ subfamily. Homotrimer.

Functionally, modulates the synthesis of GlmS, by affecting the processing and stability of the regulatory small RNA GlmZ. When glucosamine-6-phosphate (GlcN6P) concentrations are high in the cell, RapZ binds GlmZ and targets it to cleavage by RNase E. Consequently, GlmZ is inactivated and unable to activate GlmS synthesis. Under low GlcN6P concentrations, RapZ is sequestered and inactivated by an other regulatory small RNA, GlmY, preventing GlmZ degradation and leading to synthesis of GlmS. This is RNase adapter protein RapZ from Shigella boydii serotype 18 (strain CDC 3083-94 / BS512).